The primary structure comprises 202 residues: Orotate phosphoribosyltransferase (202 aa).

5-phospho-alpha-D-ribose 1-diphosphate contacts are provided by residues arginine 94, lysine 98, histidine 100, and 120-128 (EDLISTGGS). Residue serine 124 coordinates orotate.

It belongs to the purine/pyrimidine phosphoribosyltransferase family. PyrE subfamily. Homodimer. It depends on Mg(2+) as a cofactor.

The enzyme catalyses orotidine 5'-phosphate + diphosphate = orotate + 5-phospho-alpha-D-ribose 1-diphosphate. The protein operates within pyrimidine metabolism; UMP biosynthesis via de novo pathway; UMP from orotate: step 1/2. Its function is as follows. Catalyzes the transfer of a ribosyl phosphate group from 5-phosphoribose 1-diphosphate to orotate, leading to the formation of orotidine monophosphate (OMP). The sequence is that of Orotate phosphoribosyltransferase from Oceanobacillus iheyensis (strain DSM 14371 / CIP 107618 / JCM 11309 / KCTC 3954 / HTE831).